A 135-amino-acid chain; its full sequence is Mu-like prophage FluMu protein gp46 (135 aa).

To phage Mu protein gp46.

The polypeptide is Mu-like prophage FluMu protein gp46 (Haemophilus influenzae (strain ATCC 51907 / DSM 11121 / KW20 / Rd)).